The primary structure comprises 405 residues: MIQWFLKYRPRSLKDVENQDGAKKELQEWIESWLNGKPNAKAVLLHGPPGVGKTTLAEAVAHDYNLELLEMNASDSRKLQDIKGVAEKASVYGSIFGTRGKLILLDEVDGINVREDTGAIQGILELIEKTKYPIIMTANDPWNPALRELRNKTKMVGLNKLGKYPLRRLLKKICQAEKIICDDEALNYIIDTSEGDTRYAINMLQGIGEGYGKVTLDLVEAMARRKERELDPFETLRDIFWARYAWQAKNAATSAQIDYDMLIRWISENIPIQYDNIEDVWRAFDALSRASIFLKRAKGGDWDLLSYAYDLMSSGVAAAEIEKKKPNWKPKWKKYQFPSYIQLLSKSKDIRDTRDEIIKKLAIHSSFNKTLNDTYPFFLIFYKKYDKRLSLNTKEKEYLNSASKS.

Residue 47–54 (GPPGVGKT) coordinates ATP.

It belongs to the activator 1 small subunits family. RfcL subfamily. As to quaternary structure, heteromultimer composed of small subunits (RfcS) and large subunits (RfcL).

Its function is as follows. Part of the RFC clamp loader complex which loads the PCNA sliding clamp onto DNA. This chain is Replication factor C large subunit, found in Saccharolobus islandicus (strain Y.N.15.51 / Yellowstone #2) (Sulfolobus islandicus).